A 266-amino-acid polypeptide reads, in one-letter code: Putative pyruvate, phosphate dikinase regulatory protein (266 aa).

147-154 (GLSRTSKT) is an ADP binding site.

The protein belongs to the pyruvate, phosphate/water dikinase regulatory protein family. PDRP subfamily.

The enzyme catalyses N(tele)-phospho-L-histidyl/L-threonyl-[pyruvate, phosphate dikinase] + ADP = N(tele)-phospho-L-histidyl/O-phospho-L-threonyl-[pyruvate, phosphate dikinase] + AMP + H(+). It catalyses the reaction N(tele)-phospho-L-histidyl/O-phospho-L-threonyl-[pyruvate, phosphate dikinase] + phosphate + H(+) = N(tele)-phospho-L-histidyl/L-threonyl-[pyruvate, phosphate dikinase] + diphosphate. Functionally, bifunctional serine/threonine kinase and phosphorylase involved in the regulation of the pyruvate, phosphate dikinase (PPDK) by catalyzing its phosphorylation/dephosphorylation. This Clostridium perfringens (strain 13 / Type A) protein is Putative pyruvate, phosphate dikinase regulatory protein.